The primary structure comprises 386 residues: Small ribosomal subunit protein mS31 (386 aa).

The protein belongs to the mitochondrion-specific ribosomal protein mS31 family. In terms of assembly, component of the mitochondrial ribosome small subunit (28S) which comprises a 12S rRNA and about 30 distinct proteins.

It is found in the mitochondrion. This Bos taurus (Bovine) protein is Small ribosomal subunit protein mS31 (MRPS31).